A 203-amino-acid chain; its full sequence is Endo-type membrane-bound lytic murein transglycosylase A (203 aa).

A signal peptide spans 1–15 (MKLRWLMWLVVFLAG). The N-palmitoyl cysteine moiety is linked to residue C16. C16 carries S-diacylglycerol cysteine lipidation.

It belongs to the transglycosylase Slt family.

The protein localises to the cell outer membrane. The enzyme catalyses Endolytic cleavage of the (1-&gt;4)-beta-glycosidic linkage between N-acetylmuramic acid (MurNAc) and N-acetylglucosamine (GlcNAc) residues in peptidoglycan with concomitant formation of a 1,6-anhydrobond in the MurNAc residue.. Its function is as follows. Murein-degrading enzyme. May play a role in recycling of muropeptides during cell elongation and/or cell division. Preferentially cleaves at a distance of more than two disaccharide units from the ends of the glycan chain. The polypeptide is Endo-type membrane-bound lytic murein transglycosylase A (Cronobacter sakazakii (strain ATCC BAA-894) (Enterobacter sakazakii)).